We begin with the raw amino-acid sequence, 345 residues long: Protoheme IX farnesyltransferase (345 aa).

9 helical membrane passes run 33–53 (VMSL…TPIH), 54–74 (PLLG…SGAL), 105–125 (ATLG…AINW), 126–146 (LAAG…TMWL), 154–174 (IVIG…AATG), 182–202 (LMVL…SLYI), 226–246 (QILL…FTGL), 247–267 (GGWL…TLAV), and 315–335 (ILYL…GLPI).

The protein belongs to the UbiA prenyltransferase family. Protoheme IX farnesyltransferase subfamily.

It localises to the cell inner membrane. It carries out the reaction heme b + (2E,6E)-farnesyl diphosphate + H2O = Fe(II)-heme o + diphosphate. It functions in the pathway porphyrin-containing compound metabolism; heme O biosynthesis; heme O from protoheme: step 1/1. In terms of biological role, converts heme B (protoheme IX) to heme O by substitution of the vinyl group on carbon 2 of heme B porphyrin ring with a hydroxyethyl farnesyl side group. The protein is Protoheme IX farnesyltransferase of Caulobacter sp. (strain K31).